A 548-amino-acid polypeptide reads, in one-letter code: Tau-cadinol synthase (548 aa).

Mg(2+)-binding residues include D303 and D307. Substrate-binding residues include D303, D307, and R443. The DDXXD motif motif lies at 303-307 (DDTYD).

This sequence belongs to the terpene synthase family. Monomer. Requires Mg(2+) as cofactor. The cofactor is Mn(2+). Constitutively expressed in aerial tissues, but barely observed in roots.

Its subcellular location is the cytoplasm. It catalyses the reaction (2E,6E)-farnesyl diphosphate + H2O = tau-cadinol + diphosphate. It participates in secondary metabolite biosynthesis; terpenoid biosynthesis. Its function is as follows. Sesquiterpene synthase that catalyzes the formation of a blend of sesquiterpenes and sesquiterpenoid alcohols. Converts farnesyl diphosphate to tau-cadinol. This chain is Tau-cadinol synthase, found in Zea mays (Maize).